The following is a 96-amino-acid chain: MRRRKRCHRAEIQRDKKADIYPVWIHLPNQLRQIVHPLFVTRCNAPDFDKHQSLHLNHIEGIYPLASLIMPSRYRHIYITLLYLQNKSPDYDSSET.

This is Putative protein p29 (29) from Acyrthosiphon pisum secondary endosymbiont phage 1 (Bacteriophage APSE-1).